Here is a 248-residue protein sequence, read N- to C-terminus: Triosephosphate isomerase (248 aa).

A substrate-binding site is contributed by 9–11 (NWK). Histidine 94 functions as the Electrophile in the catalytic mechanism. The active-site Proton acceptor is glutamate 164. Residues glycine 170, serine 209, and 230–231 (GG) each bind substrate.

The protein belongs to the triosephosphate isomerase family. As to quaternary structure, homodimer.

The protein localises to the cytoplasm. It carries out the reaction D-glyceraldehyde 3-phosphate = dihydroxyacetone phosphate. It participates in carbohydrate biosynthesis; gluconeogenesis. Its pathway is carbohydrate degradation; glycolysis; D-glyceraldehyde 3-phosphate from glycerone phosphate: step 1/1. Functionally, involved in the gluconeogenesis. Catalyzes stereospecifically the conversion of dihydroxyacetone phosphate (DHAP) to D-glyceraldehyde-3-phosphate (G3P). The protein is Triosephosphate isomerase of Hahella chejuensis (strain KCTC 2396).